The primary structure comprises 184 residues: GMP synthase [glutamine-hydrolyzing] subunit A (184 aa).

Residues 3-184 (PLYVVNNHGQ…FENFDGICSE (182 aa)) form the Glutamine amidotransferase type-1 domain. Residue Cys75 is the Nucleophile of the active site. Residues His162 and Glu164 contribute to the active site.

In terms of assembly, heterodimer composed of a glutamine amidotransferase subunit (A) and a GMP-binding subunit (B).

The enzyme catalyses XMP + L-glutamine + ATP + H2O = GMP + L-glutamate + AMP + diphosphate + 2 H(+). It functions in the pathway purine metabolism; GMP biosynthesis; GMP from XMP (L-Gln route): step 1/1. In terms of biological role, catalyzes the synthesis of GMP from XMP. The protein is GMP synthase [glutamine-hydrolyzing] subunit A of Methanoculleus marisnigri (strain ATCC 35101 / DSM 1498 / JR1).